We begin with the raw amino-acid sequence, 210 residues long: N-(5'-phosphoribosyl)anthranilate isomerase (210 aa).

The protein belongs to the TrpF family.

It catalyses the reaction N-(5-phospho-beta-D-ribosyl)anthranilate = 1-(2-carboxyphenylamino)-1-deoxy-D-ribulose 5-phosphate. It functions in the pathway amino-acid biosynthesis; L-tryptophan biosynthesis; L-tryptophan from chorismate: step 3/5. The chain is N-(5'-phosphoribosyl)anthranilate isomerase from Methanococcus aeolicus (strain ATCC BAA-1280 / DSM 17508 / OCM 812 / Nankai-3).